Consider the following 382-residue polypeptide: Beta-1,4-galactosyltransferase 6 (382 aa).

At 1–15 (MSALKRMMRVSNRSL) the chain is on the cytoplasmic side. A helical; Signal-anchor for type II membrane protein membrane pass occupies residues 16–35 (IAFIFFFSLSTSCLYFIYVA). The Lumenal segment spans residues 36 to 382 (PGIANTYLFM…MPELAPVEDY (347 aa)). 6 N-linked (GlcNAc...) asparagine glycosylation sites follow: asparagine 71, asparagine 75, asparagine 83, asparagine 84, asparagine 99, and asparagine 122. Cysteine 108 and cysteine 152 form a disulfide bridge. UDP-alpha-D-galactose contacts are provided by residues 163–167 (PFRNR), 202–204 (FNR), 229–230 (VD), tyrosine 258, and tryptophan 290. A disulfide bridge connects residues cysteine 223 and cysteine 242. Mn(2+) is bound at residue aspartate 230. Residue 292–295 (GEDD) coordinates N-acetyl-D-glucosamine. Residue asparagine 307 is glycosylated (N-linked (GlcNAc...) asparagine). Residue histidine 323 coordinates Mn(2+). UDP-alpha-D-galactose is bound at residue 323 to 324 (HH). Residue arginine 334 coordinates N-acetyl-D-glucosamine. A glycan (N-linked (GlcNAc...) asparagine) is linked at asparagine 367.

It belongs to the glycosyltransferase 7 family. Requires Mn(2+) as cofactor. Mg(2+) serves as cofactor. It depends on Ca(2+) as a cofactor. Highest expression in brain with lower levels found in lungs, heart, skeletal muscle and kidney. Lowest expression in testis, liver and spleen.

It localises to the golgi apparatus. The protein localises to the golgi stack membrane. The enzyme catalyses a beta-D-glucosyl-(1&lt;-&gt;1')-N-acylsphing-4-enine + UDP-alpha-D-galactose = a beta-D-Gal-(1-&gt;4)-beta-D-Glc-(1&lt;-&gt;1)-Cer(d18:1(4E)) + UDP + H(+). Its pathway is protein modification; protein glycosylation. It functions in the pathway sphingolipid metabolism. Inhibited by EDTA. Its function is as follows. Catalyzes the synthesis of lactosylceramide (LacCer) via the transfer of galactose from UDP-galactose to glucosylceramide (GlcCer). LacCer is the starting point in the biosynthesis of all gangliosides (membrane-bound glycosphingolipids) which play pivotal roles in the CNS including neuronal maturation and axonal and myelin formation. This is Beta-1,4-galactosyltransferase 6 from Rattus norvegicus (Rat).